The chain runs to 365 residues: Chorismate synthase (365 aa).

NADP(+) is bound by residues R48 and R54. Residues 131 to 133, 243 to 244, G288, 303 to 307, and R329 each bind FMN; these read RSS, NA, and KPTSS.

Belongs to the chorismate synthase family. As to quaternary structure, homotetramer. FMNH2 serves as cofactor.

It catalyses the reaction 5-O-(1-carboxyvinyl)-3-phosphoshikimate = chorismate + phosphate. It functions in the pathway metabolic intermediate biosynthesis; chorismate biosynthesis; chorismate from D-erythrose 4-phosphate and phosphoenolpyruvate: step 7/7. Its function is as follows. Catalyzes the anti-1,4-elimination of the C-3 phosphate and the C-6 proR hydrogen from 5-enolpyruvylshikimate-3-phosphate (EPSP) to yield chorismate, which is the branch point compound that serves as the starting substrate for the three terminal pathways of aromatic amino acid biosynthesis. This reaction introduces a second double bond into the aromatic ring system. The polypeptide is Chorismate synthase (Agrobacterium fabrum (strain C58 / ATCC 33970) (Agrobacterium tumefaciens (strain C58))).